We begin with the raw amino-acid sequence, 126 residues long: Small ribosomal subunit protein uS12 (126 aa).

The disordered stretch occupies residues 1-23; the sequence is MPTISQLVRKGRKTVASKSTAPA. D89 is modified (3-methylthioaspartic acid).

Belongs to the universal ribosomal protein uS12 family. Part of the 30S ribosomal subunit. Contacts proteins S8 and S17. May interact with IF1 in the 30S initiation complex.

Its function is as follows. With S4 and S5 plays an important role in translational accuracy. Interacts with and stabilizes bases of the 16S rRNA that are involved in tRNA selection in the A site and with the mRNA backbone. Located at the interface of the 30S and 50S subunits, it traverses the body of the 30S subunit contacting proteins on the other side and probably holding the rRNA structure together. The combined cluster of proteins S8, S12 and S17 appears to hold together the shoulder and platform of the 30S subunit. This is Small ribosomal subunit protein uS12 from Clostridium perfringens (strain ATCC 13124 / DSM 756 / JCM 1290 / NCIMB 6125 / NCTC 8237 / Type A).